Consider the following 263-residue polypeptide: 4-hydroxy-2-oxo-heptane-1,7-dioate aldolase (263 aa).

The Proton acceptor role is filled by His45. Gln147 contacts substrate. Residue Glu149 participates in a divalent metal cation binding. Substrate-binding residues include Ala174 and Asp175. Asp175 serves as a coordination point for a divalent metal cation.

It belongs to the HpcH/HpaI aldolase family. Homohexamer; trimer of dimers. Requires a divalent metal cation as cofactor.

It catalyses the reaction 4-hydroxy-2-oxoheptanedioate = succinate semialdehyde + pyruvate. Its pathway is aromatic compound metabolism; 4-hydroxyphenylacetate degradation; pyruvate and succinate semialdehyde from 4-hydroxyphenylacetate: step 7/7. Functionally, catalyzes the reversible retro-aldol cleavage of 4-hydroxy-2-ketoheptane-1,7-dioate (HKHD) to pyruvate and succinic semialdehyde. In Salmonella paratyphi A (strain ATCC 9150 / SARB42), this protein is 4-hydroxy-2-oxo-heptane-1,7-dioate aldolase.